Reading from the N-terminus, the 373-residue chain is UDP-N-acetylglucosamine--N-acetylmuramyl-(pentapeptide) pyrophosphoryl-undecaprenol N-acetylglucosamine transferase (373 aa).

Residues 13–15, Asn-124, Arg-165, Ser-192, and Gln-293 contribute to the UDP-N-acetyl-alpha-D-glucosamine site; that span reads TGG.

It belongs to the glycosyltransferase 28 family. MurG subfamily.

Its subcellular location is the cell inner membrane. It catalyses the reaction di-trans,octa-cis-undecaprenyl diphospho-N-acetyl-alpha-D-muramoyl-L-alanyl-D-glutamyl-meso-2,6-diaminopimeloyl-D-alanyl-D-alanine + UDP-N-acetyl-alpha-D-glucosamine = di-trans,octa-cis-undecaprenyl diphospho-[N-acetyl-alpha-D-glucosaminyl-(1-&gt;4)]-N-acetyl-alpha-D-muramoyl-L-alanyl-D-glutamyl-meso-2,6-diaminopimeloyl-D-alanyl-D-alanine + UDP + H(+). It participates in cell wall biogenesis; peptidoglycan biosynthesis. Functionally, cell wall formation. Catalyzes the transfer of a GlcNAc subunit on undecaprenyl-pyrophosphoryl-MurNAc-pentapeptide (lipid intermediate I) to form undecaprenyl-pyrophosphoryl-MurNAc-(pentapeptide)GlcNAc (lipid intermediate II). This chain is UDP-N-acetylglucosamine--N-acetylmuramyl-(pentapeptide) pyrophosphoryl-undecaprenol N-acetylglucosamine transferase, found in Sinorhizobium fredii (strain NBRC 101917 / NGR234).